The following is a 151-amino-acid chain: Protein PLANT CADMIUM RESISTANCE 1 (151 aa).

Helical transmembrane passes span 31–47 (ITLC…AEIV) and 54–71 (CCAA…TSCG).

The protein belongs to the cornifelin family. In terms of assembly, homopentamer. Expressed in aerial part, but not in roots. Detected in the guard and mesophyll cells.

Its subcellular location is the cell membrane. Functionally, involved in glutathione-independent cadmium resistance. Reduces cadmium uptake rather than activating efflux, but is not closely coupled to calcium transporter. The sequence is that of Protein PLANT CADMIUM RESISTANCE 1 (PCR1) from Arabidopsis thaliana (Mouse-ear cress).